The chain runs to 151 residues: Large ribosomal subunit protein uL15 (151 aa).

The tract at residues 1-58 (MTSISLDSLKPNKGARKRKTRKGRGIAAGQGASCGFGMRGQKSRSGRPTRPGFEGGQM) is disordered. A compositionally biased stretch (basic residues) spans 13–24 (KGARKRKTRKGR). Residues 26–38 (IAAGQGASCGFGM) show a composition bias toward gly residues.

This sequence belongs to the universal ribosomal protein uL15 family. In terms of assembly, part of the 50S ribosomal subunit.

In terms of biological role, binds to the 23S rRNA. The sequence is that of Large ribosomal subunit protein uL15 from Prochlorococcus marinus (strain SARG / CCMP1375 / SS120).